Consider the following 259-residue polypeptide: Hydroxyacylglutathione hydrolase (259 aa).

Positions 56, 58, 60, 61, 112, 133, and 171 each coordinate Zn(2+). A compositionally biased stretch (basic and acidic residues) spans 224–238; the sequence is RTRETSVKEKADERS. Residues 224–245 are disordered; that stretch reads RTRETSVKEKADERSSGQNTSQ.

This sequence belongs to the metallo-beta-lactamase superfamily. Glyoxalase II family. Monomer. It depends on Zn(2+) as a cofactor.

It catalyses the reaction an S-(2-hydroxyacyl)glutathione + H2O = a 2-hydroxy carboxylate + glutathione + H(+). Its pathway is secondary metabolite metabolism; methylglyoxal degradation; (R)-lactate from methylglyoxal: step 2/2. Functionally, thiolesterase that catalyzes the hydrolysis of S-D-lactoyl-glutathione to form glutathione and D-lactic acid. This is Hydroxyacylglutathione hydrolase from Pseudomonas savastanoi pv. phaseolicola (strain 1448A / Race 6) (Pseudomonas syringae pv. phaseolicola (strain 1448A / Race 6)).